The chain runs to 156 residues: uncharacterized protein (156 aa).

This is an uncharacterized protein from Saccharomyces cerevisiae (strain ATCC 204508 / S288c) (Baker's yeast).